The sequence spans 516 residues: Acetylcholine receptor subunit delta (516 aa).

An N-terminal signal peptide occupies residues 1 to 21; sequence MEGSVLTLVLLAALVVCGSWG. Over 22–244 the chain is Extracellular; sequence LNEEERLIRH…VTFYLIIRRK (223 aa). N-linked (GlcNAc...) asparagine glycosylation is found at asparagine 96 and asparagine 163. Cysteine 150 and cysteine 164 are joined by a disulfide. Helical transmembrane passes span 245–269, 279–296, and 311–332; these read PLFY…VFYL, MAIS…LISK, and FLLF…VLNI. At 333 to 470 the chain is on the cytoplasmic side; that stretch reads HFRTPSTHVL…WNRVARTVDR (138 aa). Tyrosine 389 is modified (phosphotyrosine; by Tyr-kinases). A helical membrane pass occupies residues 471–493; the sequence is LCLFVVTPIMVVGTAWIFLQGAY.

Belongs to the ligand-gated ion channel (TC 1.A.9) family. Acetylcholine receptor (TC 1.A.9.1) subfamily. Delta/CHRND sub-subfamily. Pentamer of two alpha chains, and one each of the beta, delta, and gamma (in immature muscle) or epsilon (in mature muscle) chains. The muscle heteropentamer composed of alpha-1, beta-1, delta, epsilon subunits interacts with the alpha-conotoxin ImII.

It localises to the postsynaptic cell membrane. The protein resides in the cell membrane. The enzyme catalyses K(+)(in) = K(+)(out). The catalysed reaction is Na(+)(in) = Na(+)(out). Its function is as follows. After binding acetylcholine, the AChR responds by an extensive change in conformation that affects all subunits and leads to opening of an ion-conducting channel across the plasma membrane. This is Acetylcholine receptor subunit delta (CHRND) from Bos taurus (Bovine).